A 353-amino-acid chain; its full sequence is 4-hydroxy-2-oxovalerate aldolase 1 (353 aa).

Positions 14 to 266 (VRMTDTSLRD…KTGIDFFDIA (253 aa)) constitute a Pyruvate carboxyltransferase domain. Substrate is bound at residue 22-23 (RD). Asp23 contacts Mn(2+). The active-site Proton acceptor is the His26. Ser176 and His205 together coordinate substrate. 2 residues coordinate Mn(2+): His205 and His207. Residue Tyr296 participates in substrate binding.

It belongs to the 4-hydroxy-2-oxovalerate aldolase family.

It carries out the reaction (S)-4-hydroxy-2-oxopentanoate = acetaldehyde + pyruvate. The polypeptide is 4-hydroxy-2-oxovalerate aldolase 1 (Mycobacterium sp. (strain KMS)).